Here is a 428-residue protein sequence, read N- to C-terminus: Threonine synthase (428 aa).

Lys-107 carries the N6-(pyridoxal phosphate)lysine modification.

Belongs to the threonine synthase family. It depends on pyridoxal 5'-phosphate as a cofactor.

The enzyme catalyses O-phospho-L-homoserine + H2O = L-threonine + phosphate. It functions in the pathway amino-acid biosynthesis; L-threonine biosynthesis; L-threonine from L-aspartate: step 5/5. Is competitively inhibited by L-threo-3-hydroxyhomoserine phosphate. Its function is as follows. Catalyzes the gamma-elimination of phosphate from L-phosphohomoserine and the beta-addition of water to produce L-threonine. To a lesser extent, is able to slowly catalyze the deamination of L-threonine into alpha-ketobutyrate and that of L-serine and 3-chloroalanine into pyruvate. Is also able to rapidly convert vinylglycine to threonine, which proves that the pyridoxal p-quinonoid of vinylglycine is an intermediate in the TS reaction. The polypeptide is Threonine synthase (thrC) (Escherichia coli (strain K12)).